Consider the following 155-residue polypeptide: FUN14 domain-containing protein 1 (155 aa).

At 1–47 (MATRNPPPQDYESDDDSYEVLDLTEYARRHQWWNRVFGHSSGPMVEK) the chain is on the cytoplasmic side. Ser13 bears the Phosphoserine; by CK2 mark. Ser17 is modified (phosphoserine; by ULK1). At Tyr18 the chain carries Phosphotyrosine; by SRC. A YXXL motif is present at residues 18 to 21 (YEVL). The helical transmembrane segment at 48-68 (YSVATQIVMGGVTGWCAGFLF) threads the bilayer. At 69-74 (QKVGKL) the chain is on the mitochondrial intermembrane side. Residues 75 to 95 (AATAVGGGFLLLQIASHSGYV) traverse the membrane as a helical segment. Over 96-133 (QIDWKRVEKDVNKAKRQIKKRANKAAPEINNLIEEATE) the chain is Cytoplasmic. Lys119 participates in a covalent cross-link: Glycyl lysine isopeptide (Lys-Gly) (interchain with G-Cter in ubiquitin). A helical membrane pass occupies residues 134-154 (FIKQNIVISSGFVGGFLLGLA). Position 155 (Ser155) is a topological domain, mitochondrial intermembrane.

This sequence belongs to the FUN14 family. In terms of assembly, interacts (via YXXL motif) with MAP1 LC3 family proteins MAP1LC3A, MAP1LC3B and GABARAP. Interacts with DNM1L/DPR1. Interacts with GPX4. In terms of processing, phosphorylation at Ser-13 by CK2 and at Tyr-18 by SRC inhibits activation of mitophagy. Following hypoxia, dephosphorylated at Tyr-18, leading to interaction with MAP1 LC3 family proteins and triggering mitophagy. Dephosphorylation is mediated by PGAM5. Phosphorylated by ULK1 at Ser-17 which enhances FUNDC1 binding to LC3. Post-translationally, ubiquitinated on Lys-119. Deubiquitinated by USP19; leading to hypoxia-induced DRP1 oligomerization and GTPase activity. As to expression, widely expressed.

It localises to the mitochondrion outer membrane. Functionally, integral mitochondrial outer-membrane protein that mediates the formation of mitochondria-associated endoplasmic reticulum membranes (MAMs). In turn, mediates angiogenesis and neoangiogenesis through interference with intracellular Ca(2+) communication and regulation of the vascular endothelial growth factor receptor KDR/VEGFR2 expression at both mRNA and protein levels. Also acts as an activator of hypoxia-induced mitophagy, an important mechanism for mitochondrial quality and homeostasis, by interacting with and recruiting LC3 protein family to mitochondria. Mechanistically, recruits DRP1 at ER-mitochondria contact sites leading to DRP1 oligomerization and GTPase activity to facilitate mitochondrial fission during hypoxia. Additionally, plays a role in hepatic ferroptosis by interacting directly with glutathione peroxidase/GPX4 to facilitate its recruitment into mitochondria through TOM/TIM complex where it is degraded by mitophagy. The protein is FUN14 domain-containing protein 1 (FUNDC1) of Homo sapiens (Human).